We begin with the raw amino-acid sequence, 688 residues long: MKPLSLLIEILIILGVTIKTIKAEEHNKRQKERNVTTQVSVNEIKQYLSHILEQRTSSNVINKRENLLEKKKNQRKIRIKGIQNKDILKRNKNHLQKQAEKNFTDEGDQLFKMGIKVLQQSKSQKQKEEAYLLFAKAADMGNLKAMEKMADALLFGNFGVQNITAAIQLYESLAKEGSCKAQNALGFLSSYGIGMEYDQAKALIYYTFGSAGGNMMSQMILGYRYLSGINVLQNCEVALSYYKKVADYIADTFEKSEGVPVEKVRLTERPENLSSNSEILDWDIYQYYKFLAERGDVQIQVSLGQLHLIGRKGLDQDYYKALHYFLKAAKAGSANAMAFIGKMYLEGNAAVPQNNATAFKYFSMAASKGNAIGLHGLGLLYFHGKGVPLNYAEALKYFQKAAEKGWPDAQFQLGFMYYSGSGIWKDYKLAFKYFYLASQSGQPLAIYYLAKMYATGTGVVRSCRTAVELYKGVCELGHWAEKFLTAYFAYKDGDIDSSLVQYALLAEMGYEVAQSNSAFILESKKANILEKEKMYPMALLLWNRAAIQGNAFARVKIGDYHYYGYGTKKDYQTAATHYSIAANKYHNAQAMFNLAYMYEHGLGITKDIHLARRLYDMAAQTSPDAHIPVLFAVMKLETTHLLRDILFFNFTTRWNWLKLDNTIGPHWDLFVIGLIVPGLILLLRNHHG.

A signal peptide spans 1–23; it reads MKPLSLLIEILIILGVTIKTIKA. Residues 24–662 are Extracellular-facing; sequence EEHNKRQKER…RWNWLKLDNT (639 aa). Asn34 carries N-linked (GlcNAc...) asparagine glycosylation. Sel1-like repeat units follow at residues 107–142, 143–178, 179–214, 215–250, 297–333, 334–370, 371–406, 407–442, 443–478, 551–586, and 588–623; these read GDQL…DMGN, LKAM…KEGS, CKAQ…AGGN, MMSQ…DYIA, VQIQ…KAGS, ANAM…SKGN, AIGL…EKGW, PDAQ…QSGQ, PLAI…ELGH, AFAR…NKYH, and AQAM…QTSP. The chain crosses the membrane as a helical span at residues 663–683; sequence IGPHWDLFVIGLIVPGLILLL. Residues 684–688 lie on the Cytoplasmic side of the membrane; that stretch reads RNHHG.

This sequence belongs to the sel-1 family.

Its subcellular location is the membrane. It is found in the cell projection. The protein resides in the cilium. It localises to the nucleus speckle. The sequence is that of Protein sel-1 homolog 2 (SEL1L2) from Homo sapiens (Human).